The sequence spans 376 residues: UPF0754 membrane protein BLi01057/BL02871 (376 aa).

The next 2 membrane-spanning stretches (helical) occupy residues 1-21 (MYVF…GAVT) and 356-376 (YLGG…VILI).

Belongs to the UPF0754 family.

It is found in the cell membrane. This is UPF0754 membrane protein BLi01057/BL02871 from Bacillus licheniformis (strain ATCC 14580 / DSM 13 / JCM 2505 / CCUG 7422 / NBRC 12200 / NCIMB 9375 / NCTC 10341 / NRRL NRS-1264 / Gibson 46).